A 232-amino-acid chain; its full sequence is Ion-translocating oxidoreductase complex subunit E (232 aa).

Transmembrane regions (helical) follow at residues 18–38 (GLVQ…LTNA), 39–59 (LGLG…VSLV), 69–89 (IPVF…VINA), 93–113 (GLYL…VIIG), 128–148 (AFDG…LGAV), and 182–202 (SFLL…LIAG).

It belongs to the NqrDE/RnfAE family. The complex is composed of six subunits: RnfA, RnfB, RnfC, RnfD, RnfE and RnfG.

It is found in the cell inner membrane. In terms of biological role, part of a membrane-bound complex that couples electron transfer with translocation of ions across the membrane. In Shewanella amazonensis (strain ATCC BAA-1098 / SB2B), this protein is Ion-translocating oxidoreductase complex subunit E.